Consider the following 166-residue polypeptide: EndA-like protein (166 aa).

The protein belongs to the tRNA-intron endonuclease family. Archaeal short subfamily.

The chain is EndA-like protein from Methanopyrus kandleri (strain AV19 / DSM 6324 / JCM 9639 / NBRC 100938).